The following is an 86-amino-acid chain: Large ribosomal subunit protein uL23 (86 aa).

Belongs to the universal ribosomal protein uL23 family. Part of the 50S ribosomal subunit. Contacts protein L29.

Binds to 23S rRNA. One of the proteins that surrounds the polypeptide exit tunnel on the outside of the ribosome. The polypeptide is Large ribosomal subunit protein uL23 (Methanococcus maripaludis (strain C7 / ATCC BAA-1331)).